Here is a 91-residue protein sequence, read N- to C-terminus: UPF0250 protein mma_3250 (91 aa).

The protein belongs to the UPF0250 family.

This chain is UPF0250 protein mma_3250, found in Janthinobacterium sp. (strain Marseille) (Minibacterium massiliensis).